We begin with the raw amino-acid sequence, 215 residues long: Adenylate kinase (215 aa).

10–15 (GAGKGT) provides a ligand contact to ATP. The tract at residues 30–59 (STGDIFRKNIKEKTELGQKVEGLLAQGKLV) is NMP. Residues T31, R36, 57-59 (KLV), 85-88 (GFPR), and Q92 contribute to the AMP site. Residues 126–163 (GRRVCPSCGASYHIDNNPTKVDGICDACQTPVIQREDD) are LID. R127 contributes to the ATP binding site. Positions 130 and 133 each coordinate Zn(2+). 136–137 (SY) provides a ligand contact to ATP. Residues C150 and C153 each contribute to the Zn(2+) site. 2 residues coordinate AMP: R160 and R171. ATP is bound at residue L199.

Belongs to the adenylate kinase family. Monomer.

The protein resides in the cytoplasm. The enzyme catalyses AMP + ATP = 2 ADP. It functions in the pathway purine metabolism; AMP biosynthesis via salvage pathway; AMP from ADP: step 1/1. Its function is as follows. Catalyzes the reversible transfer of the terminal phosphate group between ATP and AMP. Plays an important role in cellular energy homeostasis and in adenine nucleotide metabolism. The chain is Adenylate kinase from Finegoldia magna (strain ATCC 29328 / DSM 20472 / WAL 2508) (Peptostreptococcus magnus).